Consider the following 192-residue polypeptide: Adenylate kinase (192 aa).

Residue 10–18 (GVPGVGGTT) participates in ATP binding.

The protein belongs to the archaeal adenylate kinase family. In terms of assembly, monomer.

It is found in the cytoplasm. It catalyses the reaction AMP + ATP = 2 ADP. The sequence is that of Adenylate kinase from Methanococcus maripaludis (strain C7 / ATCC BAA-1331).